Here is a 1193-residue protein sequence, read N- to C-terminus: MKSFKWKENTEEKDDEEKTNEKEQNKPKEIDSKTEQEAKQEKVSEADNSVKDQEGITNKNRPEDISYVDDSTIQAKTALTVEAITNIKGHLIESDQKLADERASQYLQTLTNNAVRYTTTFGISEISDEILIPYYHEIDFQGSDKELPSLFSFETFVNEYYGTDLLTYENEKFKTMMCDHPALSRSSEIFKVNAYKISIKWTGETFNPSIGDPSNIGTTSLIKNIAYVGVHNSDNYKDRKLYSRLKMFLELAANCNIILKGCATRPLGIDYELTKVSKKLNGAKILYNDKAHIIYNGIYHPVTPFCDKVNDILKEGDVDIDFGKIFKYGREVVTKINTYDILNKGYAAIDQFTAYLINMGMQRLLDHRMNANSYKDLTQANYPSRVSLHVFDTLLDEFLYVYKPTDQDWEFCLFVIMIDKEVRSLIMAKTKQMMLSRNLFGQSEIGLKLTNLITRRVQGNIAKNAADYFINVMSSGSIESLCNILCSEMYARFSKFNIECSYLETEYLDLFKFLEILLAFIITPRLAWWNSHKFGKHLYDLMSVFCRSELIAYEARYGCFIKFERSAWVKVDKHVSVYGENDLYDGIYFSFLISRTYSAEEIKAFPFISKIYSLIEPLGDYINLDRKTRAKYPFFETTVRGYLPCSIISYTDITTNNPVNTRVNNIGASIIDLSQRYFTHKPTKTSTKEAYDLILDTIGNTANNLGILMHSTVAPMLATLYDTFLFFADGFNKTSPWVVPRKLGYSGYNVYADRNKSDADRATYLIGGRAIVIPRNLDSTNSMIYTYIGIFVHGVVRCDMVTSTGSYITSSHYDPDSISIMPFNGSEITTLALKVVNHSKRINTVFTLFNYLHSKSTDEILSPVRERLSKFWTTSNARALLNEITRIFNCPIERYFTQMNAYDTMHSDPRVYKPTLYSVSSTGNIDSVQPANCAVNKQYEFGDTYLNEMLKVISHVAFDDELPLFRQTEGLVCGYFTSSSNSPDDYFSVDEDTLYFSIDLDEHPEVFTTVGTNGFSIQLQFKKGNDDHAYTNPMSKDIPSIKFLINRIGNLNAHFVQFINRMLSTQRHLIVLRKVVVDYNVITLGSWNDYTPTSSNVFDQFVKDRDLINIKLDFYDTRFIIQNQSNQLLSQYLFESYRNITPLKDFVVMGGIFGNPNRAESKLTDINKDIYCFGDDNDQTTKYFTSKKSKRVV.

2 stretches are compositionally biased toward basic and acidic residues: residues 1-10 (MKSFKWKENT) and 19-64 (TNEK…RPED). Positions 1-64 (MKSFKWKENT…GITNKNRPED (64 aa)) are disordered.

The protein belongs to the turreted BTV-fold inner capsid family. In terms of assembly, homodecamer; each decamer is made up of two conformers of VP2, called VP2A and VP2B. 12 homodecamers assemble to form an icosahedral capsid.

It is found in the virion. Functionally, inner capsid protein that self-assembles to form an icosahedral capsid with a T=2 symmetry, which consists of 120 copies of VP2, with channels at each of its five-fold vertices. This capsid constitutes the innermost concentric layer of the viral mature particle. The chain is Inner capsid protein S2 (S2) from Saccharum officinarum (Sugarcane).